Here is a 366-residue protein sequence, read N- to C-terminus: Apolipoprotein A-V (366 aa).

Residues 1 to 23 (MASMAAVLTWALALLSAFSATQA) form the signal peptide. Coiled coils occupy residues 54–157 (ATLK…VGED) and 236–262 (TLKA…RAFA). At T55 the chain carries Phosphothreonine; by FAM20C. Position 59 is a phosphoserine (S59).

Belongs to the apolipoprotein A1/A4/E family. As to quaternary structure, interacts with GPIHBP1. Interacts with SORL1; this interaction leads to APOA5 internalization and sorting either to lysosomes and degradation, or to the trans-Golgi network. In terms of processing, phosphorylated by FAM20C in the extracellular medium. In terms of tissue distribution, liver and plasma.

Its subcellular location is the secreted. It localises to the early endosome. The protein localises to the late endosome. It is found in the golgi apparatus. The protein resides in the trans-Golgi network. Minor apolipoprotein mainly associated with HDL and to a lesser extent with VLDL. May also be associated with chylomicrons. Important determinant of plasma triglyceride (TG) levels by both being a potent stimulator of apo-CII lipoprotein lipase (LPL) TG hydrolysis and an inhibitor of the hepatic VLDL-TG production rate (without affecting the VLDL-apoB production rate). Activates poorly lecithin:cholesterol acyltransferase (LCAT) and does not enhance efflux of cholesterol from macrophages. Binds heparin. This is Apolipoprotein A-V (APOA5) from Homo sapiens (Human).